The chain runs to 213 residues: Ubiquitin-conjugating enzyme E2 S (213 aa).

The UBC core domain occupies 13 to 159 (QIIRQVAKEV…ARMMTEIHAK (147 aa)). The active-site Glycyl thioester intermediate is the Cys97. Positions 157-213 (HAKPTTKTAPTKNEETNCPSTSGTQSTSEGPMAKKHAGDKNAAEKKKKEKKRALRRL) are disordered. Over residues 174-185 (CPSTSGTQSTSE) the composition is skewed to polar residues. Positions 192-202 (HAGDKNAAEKK) are enriched in basic and acidic residues. The span at 203 to 213 (KKEKKRALRRL) shows a compositional bias: basic residues.

This sequence belongs to the ubiquitin-conjugating enzyme family.

It catalyses the reaction S-ubiquitinyl-[E1 ubiquitin-activating enzyme]-L-cysteine + [E2 ubiquitin-conjugating enzyme]-L-cysteine = [E1 ubiquitin-activating enzyme]-L-cysteine + S-ubiquitinyl-[E2 ubiquitin-conjugating enzyme]-L-cysteine.. It functions in the pathway protein modification; protein ubiquitination. Catalyzes the covalent attachment of ubiquitin to other proteins. Acts as an essential factor of the anaphase promoting complex/cyclosome (APC/C), a cell cycle-regulated ubiquitin ligase that controls progression through mitosis. Acts by specifically elongating polyubiquitin chains initiated by the E2 enzyme UBCH10 on APC/C substrates, enhancing the degradation of APC/C substrates by the proteasome and promoting mitotic exit. This chain is Ubiquitin-conjugating enzyme E2 S, found in Branchiostoma floridae (Florida lancelet).